A 387-amino-acid chain; its full sequence is 1-deoxy-D-xylulose 5-phosphate reductoisomerase (387 aa).

Residues threonine 10, glycine 11, serine 12, isoleucine 13, glycine 36, arginine 37, and asparagine 124 each coordinate NADPH. Lysine 125 lines the 1-deoxy-D-xylulose 5-phosphate pocket. Position 126 (glutamate 126) interacts with NADPH. Mn(2+) is bound at residue aspartate 150. 1-deoxy-D-xylulose 5-phosphate-binding residues include serine 151, glutamate 152, serine 176, and histidine 199. Glutamate 152 lines the Mn(2+) pocket. Glycine 205 provides a ligand contact to NADPH. Residues serine 212, asparagine 217, lysine 218, and glutamate 221 each coordinate 1-deoxy-D-xylulose 5-phosphate. Glutamate 221 contributes to the Mn(2+) binding site.

This sequence belongs to the DXR family. It depends on Mg(2+) as a cofactor. Mn(2+) is required as a cofactor.

The catalysed reaction is 2-C-methyl-D-erythritol 4-phosphate + NADP(+) = 1-deoxy-D-xylulose 5-phosphate + NADPH + H(+). It functions in the pathway isoprenoid biosynthesis; isopentenyl diphosphate biosynthesis via DXP pathway; isopentenyl diphosphate from 1-deoxy-D-xylulose 5-phosphate: step 1/6. Its function is as follows. Catalyzes the NADPH-dependent rearrangement and reduction of 1-deoxy-D-xylulose-5-phosphate (DXP) to 2-C-methyl-D-erythritol 4-phosphate (MEP). The protein is 1-deoxy-D-xylulose 5-phosphate reductoisomerase of Cyanothece sp. (strain PCC 7425 / ATCC 29141).